The following is a 312-amino-acid chain: Aspartate carbamoyltransferase catalytic subunit (312 aa).

Carbamoyl phosphate-binding residues include R55 and T56. L-aspartate is bound at residue K83. Carbamoyl phosphate contacts are provided by R105, H138, and Q141. L-aspartate is bound by residues R171 and R225. Positions 266 and 267 each coordinate carbamoyl phosphate.

This sequence belongs to the aspartate/ornithine carbamoyltransferase superfamily. ATCase family. As to quaternary structure, heterododecamer (2C3:3R2) of six catalytic PyrB chains organized as two trimers (C3), and six regulatory PyrI chains organized as three dimers (R2).

The enzyme catalyses carbamoyl phosphate + L-aspartate = N-carbamoyl-L-aspartate + phosphate + H(+). Its pathway is pyrimidine metabolism; UMP biosynthesis via de novo pathway; (S)-dihydroorotate from bicarbonate: step 2/3. Its function is as follows. Catalyzes the condensation of carbamoyl phosphate and aspartate to form carbamoyl aspartate and inorganic phosphate, the committed step in the de novo pyrimidine nucleotide biosynthesis pathway. The protein is Aspartate carbamoyltransferase catalytic subunit of Corynebacterium glutamicum (strain R).